Here is a 3767-residue protein sequence, read N- to C-terminus: Transmembrane cell adhesion receptor mua-3 (3767 aa).

Residues 1–24 form the signal peptide; the sequence is MQAGISIFFLFLHIPIFFVNCSNS. Over 25–3417 the chain is Extracellular; the sequence is TSCVAREEFQ…CQVAPSNASL (3393 aa). The LDL-receptor class A 1 domain occupies 26–63; sequence SCVAREEFQCKMDDSCISMKKWQDGVDDCYDGSDEVCL. 10 disulfide bridges follow: Cys27-Cys41, Cys35-Cys54, Cys62-Cys76, Cys69-Cys89, Cys97-Cys110, Cys104-Cys123, Cys131-Cys144, Cys138-Cys157, Cys165-Cys179, and Cys172-Cys192. 3 consecutive LDL-receptor class A domains span residues 96 to 132, 133 to 166, and 167 to 209; these read GCPA…EPCA, QNQF…EECT, and TSQF…ANCT. 2 N-linked (GlcNAc...) asparagine glycosylation sites follow: Asn201 and Asn207. EGF-like domains lie at 225-268, 375-416, 418-466, 468-517, 519-566, 614-663, 665-713, 714-760, 762-810, 816-860, 861-908, 910-961, 963-1012, 1029-1070, 1071-1118, 1120-1168, and 1170-1219; these read KLKF…DKCI, NRDD…GTCR, LIDE…RKCR, LINE…RNCT, AINE…RKCV, RANP…RKCV, AVDE…RSCK, KADM…RVCR, VVNE…KNCV, DPPE…GRCV, VINE…RICR, RVNE…RRCI, AVNE…RICT, TDDG…GSCR, VYSA…RICK, LINE…RQCT, and SNNE…RVCT. 51 disulfides stabilise this stretch: Cys229–Cys243, Cys235–Cys252, Cys254–Cys267, Cys381–Cys392, Cys386–Cys402, Cys404–Cys415, Cys422–Cys435, Cys429–Cys444, Cys446–Cys465, Cys472–Cys486, Cys480–Cys495, Cys497–Cys516, Cys523–Cys536, Cys530–Cys545, Cys547–Cys565, Cys618–Cys632, Cys626–Cys642, Cys644–Cys662, Cys669–Cys682, Cys676–Cys691, Cys693–Cys712, Cys718–Cys729, Cys723–Cys738, Cys740–Cys759, Cys766–Cys779, Cys773–Cys788, Cys790–Cys809, Cys820–Cys836, Cys828–Cys845, Cys847–Cys859, Cys865–Cys879, Cys873–Cys888, Cys890–Cys907, Cys914–Cys930, Cys924–Cys939, Cys941–Cys960, Cys967–Cys981, Cys975–Cys990, Cys992–Cys1011, Cys1033–Cys1046, Cys1040–Cys1055, Cys1057–Cys1069, Cys1075–Cys1087, Cys1081–Cys1096, Cys1098–Cys1117, Cys1124–Cys1137, Cys1131–Cys1146, Cys1148–Cys1167, Cys1174–Cys1188, Cys1182–Cys1197, and Cys1199–Cys1218. A glycan (N-linked (GlcNAc...) asparagine) is linked at Asn383. An N-linked (GlcNAc...) asparagine glycan is attached at Asn515. In terms of domain architecture, VWFA spans 1230–1406; that stretch reads DLVFLIDGSG…DLDTRLRSMI (177 aa). The N-linked (GlcNAc...) asparagine glycan is linked to Asn1350. EGF-like domains are found at residues 1421–1466, 1466–1510, 1521–1562, 1563–1608, 1608–1656, 1658–1706, 1708–1755, 1759–1807, 1809–1860, 1862–1911, 1913–1961, 1963–2011, 2014–2062, 2068–2112, 2113–2160, 2162–2208, 2210–2258, 2260–2308, 2310–2358, 2360–2408, 2409–2455, 2456–2504, 2513–2563, 2565–2616, 2618–2666, 2668–2714, 2716–2763, 2763–2811, and 2833–2872; these read SEDV…RVCG, GGDL…GFCV, HDAN…GQCA, YPGS…DICL, LKNE…RVCV, LQNE…MVCK, LVNE…RRCE, TNDK…RLCI, VIPE…RLCK, LQNE…RKCK, LINE…RRCL, RINE…RICR, LVDE…RLCQ, PPPE…GSCS, IINE…RMCK, MVNE…RICK, LTNE…RACR, LVNE…RVCL, FINE…RVCV, LVDE…RVCS, APEV…RVCV, RNNA…RVCE, PRHP…RLCV, TEPV…RICK, LINE…RICS, SVNE…HRCS, MINE…RICR, RLNE…RICI, and REFP…GKCQ. Intrachain disulfides connect Cys1425-Cys1441, Cys1433-Cys1450, Cys1452-Cys1465, Cys1470-Cys1484, Cys1478-Cys1494, Cys1496-Cys1509, Cys1525-Cys1538, Cys1532-Cys1547, Cys1549-Cys1561, Cys1567-Cys1583, Cys1575-Cys1592, Cys1594-Cys1607, Cys1612-Cys1625, Cys1619-Cys1634, Cys1636-Cys1655, Cys1662-Cys1675, Cys1669-Cys1684, Cys1686-Cys1705, Cys1712-Cys1726, Cys1720-Cys1735, Cys1737-Cys1754, Cys1763-Cys1776, Cys1770-Cys1786, Cys1788-Cys1806, Cys1813-Cys1829, Cys1821-Cys1838, Cys1840-Cys1859, Cys1866-Cys1880, Cys1873-Cys1889, Cys1891-Cys1910, Cys1917-Cys1930, Cys1924-Cys1939, Cys1941-Cys1960, Cys1967-Cys1980, Cys1974-Cys1989, Cys1991-Cys2010, Cys2018-Cys2031, Cys2025-Cys2040, Cys2042-Cys2061, Cys2072-Cys2088, Cys2080-Cys2097, Cys2099-Cys2111, Cys2117-Cys2131, Cys2125-Cys2140, Cys2142-Cys2159, Cys2166-Cys2180, Cys2174-Cys2189, Cys2191-Cys2207, Cys2214-Cys2228, Cys2222-Cys2237, Cys2239-Cys2257, Cys2264-Cys2278, Cys2272-Cys2287, Cys2289-Cys2307, Cys2314-Cys2327, Cys2321-Cys2336, Cys2338-Cys2357, Cys2364-Cys2377, Cys2371-Cys2386, Cys2388-Cys2407, Cys2413-Cys2425, Cys2419-Cys2435, Cys2437-Cys2454, Cys2460-Cys2474, Cys2468-Cys2483, and Cys2485-Cys2503. The interval 2492-2521 is disordered; the sequence is RSPDSSQRGRVCEPPPPPSPPPRHPCQDPE. A compositionally biased stretch (pro residues) spans 2504–2515; sequence EPPPPPSPPPRH. 21 disulfide bridges follow: Cys2517–Cys2531, Cys2525–Cys2541, Cys2543–Cys2562, Cys2569–Cys2583, Cys2577–Cys2594, Cys2596–Cys2615, Cys2622–Cys2636, Cys2630–Cys2645, Cys2647–Cys2665, Cys2672–Cys2686, Cys2680–Cys2695, Cys2697–Cys2713, Cys2720–Cys2734, Cys2728–Cys2743, Cys2745–Cys2762, Cys2767–Cys2781, Cys2775–Cys2790, Cys2792–Cys2810, Cys2837–Cys2850, Cys2842–Cys2856, and Cys2858–Cys2871. An SEA 1 domain is found at 2873-2999; it reads EVQETPFELR…GSLRVASDTD (127 aa). N-linked (GlcNAc...) asparagine glycosylation is present at Asn2944. One can recognise an EGF-like 47 domain in the interval 3009–3048; that stretch reads EWGNCGGMSCKEHLKEVCIAGHICGCPDGMKRRDANSECR. Intrachain disulfides connect Cys3013-Cys3026, Cys3018-Cys3032, and Cys3034-Cys3047. One can recognise an SEA 2 domain in the interval 3049–3174; sequence VVESWNVPLW…SELYLNPTQP (126 aa). N-linked (GlcNAc...) asparagine glycans are attached at residues Asn3120 and Asn3130. 3 EGF-like domains span residues 3176–3220, 3224–3272, and 3272–3324; these read PFNP…KKCL, GFNE…SLCV, and VLDY…TLCM. 15 disulfides stabilise this stretch: Cys3180–Cys3191, Cys3185–Cys3201, Cys3203–Cys3219, Cys3228–Cys3242, Cys3236–Cys3251, Cys3253–Cys3271, Cys3276–Cys3288, Cys3282–Cys3297, Cys3299–Cys3323, Cys3332–Cys3345, Cys3339–Cys3354, Cys3356–Cys3372, Cys3377–Cys3386, Cys3380–Cys3397, and Cys3399–Cys3408. Asn3285 carries an N-linked (GlcNAc...) asparagine glycan. Residues 3328–3373 form the EGF-like 51; calcium-binding domain; it reads DVDECALGLNNCSGVAHCIDRAVGYTCKCPDGYIDGNPDEPGRVCG. Asn3337 is a glycosylation site (N-linked (GlcNAc...) asparagine; atypical). Asn3338 carries N-linked (GlcNAc...) asparagine glycosylation. Positions 3373–3409 constitute an EGF-like 52 domain; the sequence is GALLCDLCNAHGDCVHNTATNNITCVCTDGWTGPQCQ. The N-linked (GlcNAc...) asparagine glycan is linked to Asn3394. Asn3414 carries N-linked (GlcNAc...) asparagine glycosylation. Residues 3418-3438 form a helical membrane-spanning segment; sequence VLLILLALLFLLLTLCCLLYF. At 3439-3767 the chain is on the cytoplasmic side; that stretch reads CTKCHCFKGR…SQTSTHVTKK (329 aa). The tract at residues 3582-3729 is disordered; it reads TTTTDEQGNT…EEDVEHSVGD (148 aa). Residues 3588-3597 are compositionally biased toward polar residues; it reads QGNTIVTTTE. Residues 3630-3665 are compositionally biased toward low complexity; that stretch reads QSQSQQQQSMSQGMSQSMSQHATSAGYSSSGMESSA. Residues 3675 to 3684 show a composition bias toward basic and acidic residues; sequence HTGERERGGS. Residues 3690 to 3702 are compositionally biased toward low complexity; it reads IGRARGMAAASSG.

Expressed in the hypodermis at the sites of muscle contact, in striated muscles including body wall muscles, the anal sphincter muscles and the junctions between the anal sphincter muscle and rectal cuticle. Also expressed in non-muscle cells including the excretory duct cell and pore cells.

The protein localises to the cell membrane. It localises to the cell junction. The protein resides in the hemidesmosome. In terms of biological role, involved in cell adhesion and required for organ positioning and attachment. At the hypodermal surface, required for attachment of the hypdermermis to the basal cuticle in postembryonic development, possibly through intermediate filaments of the cytoskeleton. This is Transmembrane cell adhesion receptor mua-3 from Caenorhabditis elegans.